An 888-amino-acid polypeptide reads, in one-letter code: 3-hydroxy-3-methylglutaryl-coenzyme A reductase (888 aa).

Residues 1 to 9 (MLSRLFRMH) are Cytoplasmic-facing. Residues 10–39 (GLFVASHPWEVIVGTVTLTICMMSMNMFTG) form a helical membrane-spanning segment. Residues 40–56 (NNKICGWNYECPKFEED) lie on the Lumenal side of the membrane. Residues 57–78 (VLSSDIIILTITRCIAILYIYF) form a helical membrane-spanning segment. Residues 61–218 (DIIILTITRC…MTFFPACVSL (158 aa)) enclose the SSD domain. Residues 75 to 78 (YIYF) carry the INSIG-binding motif motif. The Cytoplasmic portion of the chain corresponds to 79 to 89 (QFQNLRQLGSK). Residue K89 forms a Glycyl lysine isopeptide (Lys-Gly) (interchain with G-Cter in ubiquitin) linkage. Residues 90-114 (YILGIAGLFTIFSSFVFSTVVIHFL) traverse the membrane as a helical segment. Topologically, residues 115-123 (DKELTGLNE) are lumenal. Residues 124–149 (ALPFFLLLIDLSRASTLAKFALSSNS) form a helical membrane-spanning segment. Topologically, residues 150–159 (QDEVRENIAR) are cytoplasmic. Residues 160-187 (GMAILGPTFTLDALVECLVIGVGTMSGV) traverse the membrane as a helical segment. The Lumenal portion of the chain corresponds to 188–191 (RQLE). A helical transmembrane segment spans residues 192 to 220 (IMCCFGCMSVLANYFVFMTFFPACVSLVL). The Cytoplasmic segment spans residues 221–248 (ELSRESREGRPIWLLSHFARVLEEEENK). K248 is covalently cross-linked (Glycyl lysine isopeptide (Lys-Gly) (interchain with G-Cter in ubiquitin)). Residues 249 to 275 (PNPVTQRVKMIMSLGLVLVHAHSRWIA) form a helical membrane-spanning segment. Over 276–314 (DPSPQNSTADTSKVSLGLDENVSKRIEPSVSLWQFYLSK) the chain is Lumenal. Residues N281 and N296 are each glycosylated (N-linked (GlcNAc...) asparagine). Residues 315–339 (MISMDIEQVITLSLALLLAVKYIFF) traverse the membrane as a helical segment. Residues 340 to 888 (EQTETESTLS…LQGACTKKTA (549 aa)) are Cytoplasmic-facing. Residues E559, K691, and D767 each act as charge relay system in the active site. The Proton donor role is filled by H866. At S872 the chain carries Phosphoserine; by AMPK.

Belongs to the HMG-CoA reductase family. As to quaternary structure, homotetramer. Homodimer. Interacts (via its SSD) with INSIG1; the interaction, accelerated by sterols, leads to the recruitment of HMGCR to AMFR/gp78 for its ubiquitination by the sterol-mediated ERAD pathway. Interacts with UBIAD1. Undergoes sterol-mediated ubiquitination and ER-associated degradation (ERAD). Accumulation of sterols in the endoplasmic reticulum (ER) membrane, triggers binding of the reductase to the ER membrane protein INSIG1 or INSIG2. The INSIG1 binding leads to the recruitment of the ubiquitin ligase, AMFR/gp78, RNF139 or RNF145, initiating ubiquitination of the reductase. The ubiquitinated reductase is then extracted from the ER membrane and delivered to cytosolic 26S proteosomes by a mechanism probably mediated by the ATPase Valosin-containing protein VCP/p97. The INSIG2-binding leads to the recruitment of the ubiquitin ligase RNF139, initiating ubiquitination of the reductase. Lys-248 is the main site of ubiquitination. Ubiquitination is enhanced by the presence of a geranylgeranylated protein. In terms of processing, N-glycosylated. Deglycosylated by NGLY1 on release from the endoplasmic reticulum (ER) in a sterol-mediated manner. Post-translationally, phosphorylated. Phosphorylation at Ser-872 reduces the catalytic activity.

The protein localises to the endoplasmic reticulum membrane. It localises to the peroxisome membrane. The enzyme catalyses (R)-mevalonate + 2 NADP(+) + CoA = (3S)-3-hydroxy-3-methylglutaryl-CoA + 2 NADPH + 2 H(+). The protein operates within metabolic intermediate biosynthesis; (R)-mevalonate biosynthesis; (R)-mevalonate from acetyl-CoA: step 3/3. With respect to regulation, regulated by a negative feedback mechanism through sterols and non-sterol metabolites derived from mevalonate. Phosphorylation at Ser-872 down-regulates the catalytic activity. Its function is as follows. Catalyzes the conversion of (3S)-hydroxy-3-methylglutaryl-CoA (HMG-CoA) to mevalonic acid, the rate-limiting step in the synthesis of cholesterol and other isoprenoids, thus plays a critical role in cellular cholesterol homeostasis. The polypeptide is 3-hydroxy-3-methylglutaryl-coenzyme A reductase (HMGCR) (Pongo abelii (Sumatran orangutan)).